The sequence spans 368 residues: 4-hydroxy-3-methylbut-2-en-1-yl diphosphate synthase (flavodoxin) (368 aa).

[4Fe-4S] cluster is bound by residues Cys-268, Cys-271, Cys-303, and Glu-310.

Belongs to the IspG family. The cofactor is [4Fe-4S] cluster.

The catalysed reaction is (2E)-4-hydroxy-3-methylbut-2-enyl diphosphate + oxidized [flavodoxin] + H2O + 2 H(+) = 2-C-methyl-D-erythritol 2,4-cyclic diphosphate + reduced [flavodoxin]. It participates in isoprenoid biosynthesis; isopentenyl diphosphate biosynthesis via DXP pathway; isopentenyl diphosphate from 1-deoxy-D-xylulose 5-phosphate: step 5/6. Converts 2C-methyl-D-erythritol 2,4-cyclodiphosphate (ME-2,4cPP) into 1-hydroxy-2-methyl-2-(E)-butenyl 4-diphosphate. The protein is 4-hydroxy-3-methylbut-2-en-1-yl diphosphate synthase (flavodoxin) of Listeria monocytogenes serovar 1/2a (strain ATCC BAA-679 / EGD-e).